Consider the following 390-residue polypeptide: tRNA-specific 2-thiouridylase MnmA (390 aa).

ATP-binding positions include 29–36 (GLSGGVDS) and L55. C116 (nucleophile) is an active-site residue. C116 and C225 are disulfide-bonded. G141 is a binding site for ATP. The interaction with tRNA stretch occupies residues 175–177 (KDQ). Catalysis depends on C225, which acts as the Cysteine persulfide intermediate. The interaction with tRNA stretch occupies residues 330-331 (RY).

It belongs to the MnmA/TRMU family.

It is found in the cytoplasm. It catalyses the reaction S-sulfanyl-L-cysteinyl-[protein] + uridine(34) in tRNA + AH2 + ATP = 2-thiouridine(34) in tRNA + L-cysteinyl-[protein] + A + AMP + diphosphate + H(+). Its function is as follows. Catalyzes the 2-thiolation of uridine at the wobble position (U34) of tRNA, leading to the formation of s(2)U34. This is tRNA-specific 2-thiouridylase MnmA from Prochlorococcus marinus (strain MIT 9515).